We begin with the raw amino-acid sequence, 353 residues long: MKIAVLPGDGIGPEIISQAVKVLEALKSEGAKIEMETAPIGGAGYDAAGDPLPEATLKLAREADAVLLGAVGGPQYDTLDRPLRPERGLLRIRKELNLFANLRPALLYPELASASSLKPEVVSGLDLMIVRELTGDVYFGQPRGIETRNGERVGFNTMLYSESEVRRVAHVAFGIAMKRGKKLCSVEKANVLECSELWKEIMIEVAKDYPEVELSHMYVDNAAMQLIRAPKQFDTIVTGNIFGDILSDAASMLSGSIGMLPSASLDEHNKGMYEPIHGSAPDIAGKNLANPLATILSVAMMYRYTFADLATADRIENAVKQVIAKGYRTGDIWTEGTQKVSCSEMGDAVVVAL.

Residue 73–86 coordinates NAD(+); sequence GPQYDTLDRPLRPE. Substrate-binding residues include R93, R103, R131, and D220. Mg(2+) contacts are provided by D220, D244, and D248. 278-290 provides a ligand contact to NAD(+); sequence GSAPDIAGKNLAN.

It belongs to the isocitrate and isopropylmalate dehydrogenases family. LeuB type 1 subfamily. In terms of assembly, homodimer. It depends on Mg(2+) as a cofactor. Mn(2+) is required as a cofactor.

The protein resides in the cytoplasm. The catalysed reaction is (2R,3S)-3-isopropylmalate + NAD(+) = 4-methyl-2-oxopentanoate + CO2 + NADH. It functions in the pathway amino-acid biosynthesis; L-leucine biosynthesis; L-leucine from 3-methyl-2-oxobutanoate: step 3/4. In terms of biological role, catalyzes the oxidation of 3-carboxy-2-hydroxy-4-methylpentanoate (3-isopropylmalate) to 3-carboxy-4-methyl-2-oxopentanoate. The product decarboxylates to 4-methyl-2 oxopentanoate. The polypeptide is 3-isopropylmalate dehydrogenase (Thiobacillus denitrificans (strain ATCC 25259 / T1)).